The sequence spans 113 residues: Protein S100-A9 (113 aa).

N-acetylalanine is present on alanine 2. EF-hand domains are found at residues 13–48 and 55–90; these read ITTIIDTFHQYSRKEGHPDTLSKKEFRQMVEAQLAT and RNEALINDIMEDLDTNQDNQLSFEECMMLMAKLIFA. Histidine 21 contacts Zn(2+). Ca(2+) contacts are provided by serine 24 and histidine 29. Aspartate 31 contributes to the Zn(2+) binding site. Ca(2+)-binding residues include threonine 32, glutamate 37, aspartate 68, asparagine 70, aspartate 72, glutamine 74, and glutamate 79. Zn(2+) is bound by residues histidine 92 and histidine 96. Histidine 107 is subject to Pros-methylhistidine.

It belongs to the S-100 family. Homodimer. Preferentially exists as a heterodimer or heterotetramer with S100A8 known as calprotectin (S100A8/A9). S100A9 interacts with ATP2A2. S100A9 interacts with AGER, and with the heterodimeric complex formed by TLR4 and LY96 in the presence of calcium and/or zinc ions. S100A9 binds quinoline-3-carboxamides in the presence of calcium and/or zinc ions. S100A9 interacts with amyloid-beta protein 40. Calprotectin (S100A8/9) interacts with CEACAM3 and tubulin filaments in a calcium-dependent manner. Heterotetrameric calprotectin (S100A8/A9) interacts with ANXA6 and associates with tubulin filaments in activated monocytes. Calprotectin (S100A8/9) interacts with NCF2/P67PHOX, RAC1, RAC2, CYBA and CYBB. Calprotectin (S100A8/9) interacts with NOS2 to form the iNOS-S100A8/A9 transnitrosylase complex; induced by LDL(ox). Calprotectin (S100A8/9) interacts with CD69. In terms of processing, phosphorylated. Phosphorylation inhibits activation of tubulin polymerization. Post-translationally, methylation at His-107 by METTL9 reduces zinc-binding without affecting heterodimerization with S100A8.

The protein resides in the secreted. The protein localises to the cytoplasm. It is found in the cytoskeleton. Its subcellular location is the cell membrane. Functionally, S100A9 is a calcium- and zinc-binding protein which plays a prominent role in the regulation of inflammatory processes and immune response. It can induce neutrophil chemotaxis, adhesion, can increase the bactericidal activity of neutrophils by promoting phagocytosis via activation of SYK, PI3K/AKT, and ERK1/2 and can induce degranulation of neutrophils by a MAPK-dependent mechanism. Predominantly found as calprotectin (S100A8/A9) which has a wide plethora of intra- and extracellular functions. The intracellular functions include: facilitating leukocyte arachidonic acid trafficking and metabolism, modulation of the tubulin-dependent cytoskeleton during migration of phagocytes and activation of the neutrophilic NADPH-oxidase. Also participates in regulatory T-cell differentiation together with CD69. Activates NADPH-oxidase by facilitating the enzyme complex assembly at the cell membrane, transferring arachidonic acid, an essential cofactor, to the enzyme complex and S100A8 contributes to the enzyme assembly by directly binding to NCF2/P67PHOX. The extracellular functions involve pro-inflammatory, antimicrobial, oxidant-scavenging and apoptosis-inducing activities. Its pro-inflammatory activity includes recruitment of leukocytes, promotion of cytokine and chemokine production, and regulation of leukocyte adhesion and migration. Acts as an alarmin or a danger associated molecular pattern (DAMP) molecule and stimulates innate immune cells via binding to pattern recognition receptors such as Toll-like receptor 4 (TLR4) and receptor for advanced glycation endproducts (AGER). Binding to TLR4 and AGER activates the MAP-kinase and NF-kappa-B signaling pathways resulting in the amplification of the pro-inflammatory cascade. Has antimicrobial activity towards bacteria and fungi and exerts its antimicrobial activity probably via chelation of Zn(2+) which is essential for microbial growth. Can induce cell death via autophagy and apoptosis and this occurs through the cross-talk of mitochondria and lysosomes via reactive oxygen species (ROS) and the process involves BNIP3. Can regulate neutrophil number and apoptosis by an anti-apoptotic effect; regulates cell survival via ITGAM/ITGB and TLR4 and a signaling mechanism involving MEK-ERK. Its role as an oxidant scavenger has a protective role in preventing exaggerated tissue damage by scavenging oxidants. The iNOS-S100A8/A9 transnitrosylase complex is proposed to direct selective inflammatory stimulus-dependent S-nitrosylation of multiple targets such as GAPDH, NXA5, EZR, MSN and VIM by recognizing a [IL]-x-C-x-x-[DE] motif. The polypeptide is Protein S100-A9 (S100a9) (Mus musculus (Mouse)).